A 371-amino-acid polypeptide reads, in one-letter code: Cytochrome b (371 aa).

A run of 4 helical transmembrane segments spans residues 25-45, 69-90, 105-125, and 170-190; these read FGSM…FLAV, WMMQ…YIHI, WLSG…XXXX, and XXXX…LHIM. Residues His75 and His89 each contribute to the heme b site. The heme b site is built by Xaa174 and His188. A ubiquinone is bound at residue His193. The next 4 membrane-spanning stretches (helical) occupy residues 218–238, 280–300, 312–332, and 339–358; these read YKDL…VSFL, LGGA…PFTH, IMQL…WAAT, and FTMI…ITNP.

Belongs to the cytochrome b family. As to quaternary structure, the cytochrome bc1 complex contains 3 respiratory subunits (MT-CYB, CYC1 and UQCRFS1), 2 core proteins (UQCRC1 and UQCRC2) and probably 6 low-molecular weight proteins. Heme b is required as a cofactor.

It is found in the mitochondrion inner membrane. In terms of biological role, component of the ubiquinol-cytochrome c reductase complex (complex III or cytochrome b-c1 complex) that is part of the mitochondrial respiratory chain. The b-c1 complex mediates electron transfer from ubiquinol to cytochrome c. Contributes to the generation of a proton gradient across the mitochondrial membrane that is then used for ATP synthesis. The sequence is that of Cytochrome b (MT-CYB) from Eryx jaculus (Javelin sand boa).